Reading from the N-terminus, the 1559-residue chain is Arginine-glutamic acid dipeptide repeats protein (1559 aa).

Positions 1–36 (MTADKDKDKDKEKDRDRDRDRERDKRDKARESENAR) are enriched in basic and acidic residues. Positions 1-89 (MTADKDKDKD…KKKSRYERTD (89 aa)) are disordered. Phosphoserine is present on residues Ser-53 and Ser-56. A compositionally biased stretch (basic residues) spans 73–84 (KSRKKPPKKKSR). The BAH domain maps to 102 to 282 (VVYRPGDCVY…PETRRLNSTQ (181 aa)). Thr-119 carries the post-translational modification Phosphothreonine. Residues Ser-141 and Ser-303 each carry the phosphoserine modification. The ELM2 domain maps to 283–386 (GEIRVGPSHQ…KALQRLVKKP (104 aa)). The SANT domain occupies 390-442 (LIEKCWTEDEVKRFVKGLRQYGKNFFRIRKELLPNKETGELITFYYYWKKTPE). The segment at 463-494 (TRTASTPVNTPSRPPSSEFLDLSSASEDDFDS) is disordered. Residues 464–473 (RTASTPVNTP) are compositionally biased toward polar residues. The segment covering 478-487 (SSEFLDLSSA) has biased composition (low complexity). Residues 507–532 (RHCFTTTSKDWHHGGRENILLCTDCR) form a GATA-type zinc finger. Residues 541–1125 (LPPIEKPVDP…PSHASQSARF (585 aa)) form a disordered region. Lys-559 is covalently cross-linked (Glycyl lysine isopeptide (Lys-Gly) (interchain with G-Cter in SUMO2)). Phosphoserine occurs at positions 593, 599, and 612. Residues 608-622 (SGRNSPSAASTSSND) are compositionally biased toward low complexity. Residues 623-639 (SKAEAVKKSAKKVKEEA) show a composition bias toward basic and acidic residues. Residue Lys-636 forms a Glycyl lysine isopeptide (Lys-Gly) (interchain with G-Cter in SUMO2) linkage. Phosphoserine is present on residues Ser-641, Ser-655, Ser-674, and Ser-678. Residues 651–672 (EKVASDTEDTDRATSKKTKTQE) show a composition bias toward basic and acidic residues. The span at 687-707 (SDSRSVNDEGSSDPKDIDQDN) shows a compositional bias: basic and acidic residues. Residues 708 to 735 (RSTSPSIPSPQDNESDSDSSAQQQMLQT) are compositionally biased toward polar residues. Over residues 736–761 (QPPALQAPSGAASAPSTAPPGTTQLP) the composition is skewed to low complexity. The span at 768–791 (SATTVPPQGSPATSQPPNQTQSTV) shows a compositional bias: polar residues. Positions 805-822 (LHPPRLPSPHPPLQPMTA) are enriched in pro residues. Residues 890–900 (QLPASQSALQP) show a composition bias toward low complexity. The segment covering 901 to 931 (QQPPREQPLPPAPLAMPHIKPPPTTPIPQLP) has biased composition (pro residues). Residues 961–971 (KPLSSLSTHHP) are compositionally biased toward low complexity. Pro residues predominate over residues 1027–1053 (PQHPFVPGGPPPITPPSCPPTSTPPAG). Over residues 1054–1068 (PSSSSQPPCSAAVSS) the composition is skewed to low complexity. 3 positions are modified to phosphoserine: Ser-1098, Ser-1105, and Ser-1107. Over residues 1098-1109 (SPPPPPRSPSPE) the composition is skewed to pro residues. Thr-1111 is subject to Phosphothreonine. Residues 1148–1205 (GSKLAKKREEAIEKAKREAEQKAREEREREKEKEKEREREREREREAERAAQKASSSA) adopt a coiled-coil conformation. Lys-1150 carries the post-translational modification N6-acetyllysine. The segment covering 1154–1198 (KREEAIEKAKREAEQKAREEREREKEKEKEREREREREREAERAA) has biased composition (basic and acidic residues). A disordered region spans residues 1154–1239 (KREEAIEKAK…TTIAAVPPYI (86 aa)). Residue Tyr-1252 is modified to Phosphotyrosine. Phosphoserine is present on Ser-1259.

As to quaternary structure, interacts with HDAC1 and ATN1. Interaction with ATN1 is improved when the poly-Gln region of ATN1 is extended. As to expression, widely expressed.

It is found in the nucleus. Its subcellular location is the PML body. Plays a role as a transcriptional repressor during development. May play a role in the control of cell survival. Interacts with FAT1. The sequence is that of Arginine-glutamic acid dipeptide repeats protein (Rere) from Rattus norvegicus (Rat).